The primary structure comprises 393 residues: S-adenosylmethionine synthase (393 aa).

His16 contacts ATP. Asp18 serves as a coordination point for Mg(2+). Glu44 lines the K(+) pocket. Positions 57 and 100 each coordinate L-methionine. The interval 100–110 is flexible loop; that stretch reads QSNDIAQGVDH. ATP-binding positions include 167–169, 238–239, Asp247, 253–254, Ala270, and Lys274; these read DAK, RF, and RK. Asp247 provides a ligand contact to L-methionine. Lys278 contributes to the L-methionine binding site.

Belongs to the AdoMet synthase family. In terms of assembly, homotetramer; dimer of dimers. Mg(2+) is required as a cofactor. It depends on K(+) as a cofactor.

The protein resides in the cytoplasm. The enzyme catalyses L-methionine + ATP + H2O = S-adenosyl-L-methionine + phosphate + diphosphate. The protein operates within amino-acid biosynthesis; S-adenosyl-L-methionine biosynthesis; S-adenosyl-L-methionine from L-methionine: step 1/1. Its function is as follows. Catalyzes the formation of S-adenosylmethionine (AdoMet) from methionine and ATP. The overall synthetic reaction is composed of two sequential steps, AdoMet formation and the subsequent tripolyphosphate hydrolysis which occurs prior to release of AdoMet from the enzyme. The protein is S-adenosylmethionine synthase of Acidovorax sp. (strain JS42).